The following is a 228-amino-acid chain: Small ribosomal subunit protein uS3 (228 aa).

A KH type-2 domain is found at 39 to 107 (VREYLQDKLK…PVHINIEEIR (69 aa)).

The protein belongs to the universal ribosomal protein uS3 family. As to quaternary structure, part of the 30S ribosomal subunit. Forms a tight complex with proteins S10 and S14.

In terms of biological role, binds the lower part of the 30S subunit head. Binds mRNA in the 70S ribosome, positioning it for translation. The sequence is that of Small ribosomal subunit protein uS3 from Pseudomonas fluorescens (strain ATCC BAA-477 / NRRL B-23932 / Pf-5).